An 868-amino-acid polypeptide reads, in one-letter code: DNA topoisomerase 1 (868 aa).

In terms of domain architecture, Toprim spans 3–148 (KSLVIVESPA…RFSRVVFNEI (146 aa)). Glu-9 and Asp-117 together coordinate Mg(2+). Positions 164 to 581 (NMDRVNAQQT…QFFKDFSSQL (418 aa)) constitute a Topo IA-type catalytic domain. Positions 198–203 (SAGRVQ) are interaction with DNA. The active-site O-(5'-phospho-DNA)-tyrosine intermediate is Tyr-325. 3 C4-type zinc fingers span residues 605-636 (CPTC…KERC), 667-694 (CTKC…NPNC), and 716-739 (CDKC…CTNC).

It belongs to the type IA topoisomerase family. Monomer. Mg(2+) is required as a cofactor.

It carries out the reaction ATP-independent breakage of single-stranded DNA, followed by passage and rejoining.. Its function is as follows. Releases the supercoiling and torsional tension of DNA, which is introduced during the DNA replication and transcription, by transiently cleaving and rejoining one strand of the DNA duplex. Introduces a single-strand break via transesterification at a target site in duplex DNA. The scissile phosphodiester is attacked by the catalytic tyrosine of the enzyme, resulting in the formation of a DNA-(5'-phosphotyrosyl)-enzyme intermediate and the expulsion of a 3'-OH DNA strand. The free DNA strand then undergoes passage around the unbroken strand, thus removing DNA supercoils. Finally, in the religation step, the DNA 3'-OH attacks the covalent intermediate to expel the active-site tyrosine and restore the DNA phosphodiester backbone. The chain is DNA topoisomerase 1 from Haemophilus influenzae (strain ATCC 51907 / DSM 11121 / KW20 / Rd).